The primary structure comprises 349 residues: 2-oxoglutarate-Fe(II) type oxidoreductase ppzD (349 aa).

A Fe2OG dioxygenase domain is found at 200–311 (NTSELRLNHY…RYSVAYFGKP (112 aa)). Fe cation is bound by residues H227, D229, and H287. A 2-oxoglutarate-binding site is contributed by R302.

This sequence belongs to the iron/ascorbate-dependent oxidoreductase family. Fe(2+) serves as cofactor.

It catalyses the reaction L-proline + 2-oxoglutarate + O2 = trans-4-hydroxy-L-proline + succinate + CO2. The catalysed reaction is L-proline + 2-oxoglutarate + O2 = trans-3-hydroxy-L-proline + succinate + CO2. It carries out the reaction D-proline + 2-oxoglutarate + O2 = cis-4-hydroxy-D-proline + succinate + CO2. It participates in secondary metabolite biosynthesis. 2-oxoglutarate-Fe(II) type oxidoreductase; part of the gene cluster that mediates the biosynthesis of pyrrolopyrazines, secondary metabolites showing insecticidal activity. Within the pathway, ppzD converts L-proline into trans-4-hydroxy-L-proline as a major product, yielding a key precursor for peramine biosynthesis. PpzD is also able to convert L-proline into trans-3-hydroxy-L-proline. The single multifunctional NRPS ppzA is sufficient to produce peramine via condensation of 1-pyrroline-5-carboxylate and arginine, N-methylation of the alpha-amino group of arginine and reduction of the thioester and the cyclization to form an iminium ion resulting in release from the peptide synthetase. Deprotonation of this intermediate and oxidation of the pyrroline ring would give rise to peramine. In Epichloe species that produce only peramine, the peramine synthetase gene is not localized in a gene cluster, in contrast to Metarhizium species that contain additional pyrrolopyrazine biosynthesis genes. The 2-oxoglutarate-Fe(II) type oxidoreductase ppzC hydroxylates peramine to yield the newly identified compound 8-hydroxyperamine whereas ppzD converts L-proline into trans-4-hydroxy-L-proline, a precursor of peramine biosynthesis. This Metarhizium majus (strain ARSEF 297) protein is 2-oxoglutarate-Fe(II) type oxidoreductase ppzD (ppzD).